Consider the following 557-residue polypeptide: Suprabasin (557 aa).

Positions 1–23 are cleaved as a signal peptide; that stretch reads MHLASLLSSCSLLLLLGALPGWA. Disordered stretches follow at residues 150–175, 422–441, 464–490, and 509–533; these read RFGQGAHHATGQAGKEAEKFGQGAHH, GQGAHHAAEQAGKQAGKVAQ, AAGQAGKEAEKLGQGVHHAAGQAGKQE, and NQLLNDGHPGGSTTQHGGAATTTLT. Over residues 153–175 the composition is skewed to low complexity; sequence QGAHHATGQAGKEAEKFGQGAHH. Residues 476 to 487 show a composition bias toward low complexity; the sequence is GQGVHHAAGQAG.

The protein localises to the secreted. This chain is Suprabasin (SBSN), found in Bos taurus (Bovine).